A 267-amino-acid chain; its full sequence is 4-hydroxy-tetrahydrodipicolinate reductase (267 aa).

NAD(+)-binding positions include 8 to 13 (GAAGRM) and Glu-34. Arg-35 is a binding site for NADP(+). NAD(+)-binding positions include 98 to 100 (GST) and 122 to 125 (APNM). His-155 functions as the Proton donor/acceptor in the catalytic mechanism. His-156 serves as a coordination point for (S)-2,3,4,5-tetrahydrodipicolinate. The active-site Proton donor is Lys-159. 165-166 (GT) is a (S)-2,3,4,5-tetrahydrodipicolinate binding site.

It belongs to the DapB family.

The protein resides in the cytoplasm. The enzyme catalyses (S)-2,3,4,5-tetrahydrodipicolinate + NAD(+) + H2O = (2S,4S)-4-hydroxy-2,3,4,5-tetrahydrodipicolinate + NADH + H(+). The catalysed reaction is (S)-2,3,4,5-tetrahydrodipicolinate + NADP(+) + H2O = (2S,4S)-4-hydroxy-2,3,4,5-tetrahydrodipicolinate + NADPH + H(+). The protein operates within amino-acid biosynthesis; L-lysine biosynthesis via DAP pathway; (S)-tetrahydrodipicolinate from L-aspartate: step 4/4. In terms of biological role, catalyzes the conversion of 4-hydroxy-tetrahydrodipicolinate (HTPA) to tetrahydrodipicolinate. This Pelobacter propionicus (strain DSM 2379 / NBRC 103807 / OttBd1) protein is 4-hydroxy-tetrahydrodipicolinate reductase.